The chain runs to 192 residues: Adenylate kinase (192 aa).

10 to 15 (GAGKGT) serves as a coordination point for ATP. An NMP region spans residues 30 to 59 (STGDMLREAIEKETEIGKQAKIFIESGALV). AMP is bound by residues Thr31, Arg36, 57–59 (ALV), 85–88 (GYPR), and Gln92. Residues 126 to 142 (KRVEEVVAVGGKIRSDD) are LID. Arg127 is a binding site for ATP. AMP is bound by residues Arg139 and Arg150. Ala178 is an ATP binding site.

The protein belongs to the adenylate kinase family. Monomer.

Its subcellular location is the cytoplasm. The catalysed reaction is AMP + ATP = 2 ADP. It participates in purine metabolism; AMP biosynthesis via salvage pathway; AMP from ADP: step 1/1. In terms of biological role, catalyzes the reversible transfer of the terminal phosphate group between ATP and AMP. Plays an important role in cellular energy homeostasis and in adenine nucleotide metabolism. This is Adenylate kinase from Bartonella bacilliformis (strain ATCC 35685 / KC583 / Herrer 020/F12,63).